Consider the following 728-residue polypeptide: Polyribonucleotide nucleotidyltransferase (728 aa).

Mg(2+) is bound by residues aspartate 489 and aspartate 495. One can recognise a KH domain in the interval proline 556–isoleucine 615. One can recognise an S1 motif domain in the interval aspartate 625–lysine 693. The disordered stretch occupies residues serine 691–glutamate 728. Residues proline 700–histidine 709 show a composition bias toward basic and acidic residues.

It belongs to the polyribonucleotide nucleotidyltransferase family. Mg(2+) serves as cofactor.

Its subcellular location is the cytoplasm. It carries out the reaction RNA(n+1) + phosphate = RNA(n) + a ribonucleoside 5'-diphosphate. Involved in mRNA degradation. Catalyzes the phosphorolysis of single-stranded polyribonucleotides processively in the 3'- to 5'-direction. The polypeptide is Polyribonucleotide nucleotidyltransferase (Streptococcus gordonii (strain Challis / ATCC 35105 / BCRC 15272 / CH1 / DL1 / V288)).